A 368-amino-acid chain; its full sequence is NAD(P)H-quinone oxidoreductase subunit 1, chloroplastic (368 aa).

9 consecutive transmembrane segments (helical) span residues 27–47, 97–117, 130–150, 166–186, 204–224, 249–269, 270–290, 305–325, and 348–368; these read FLWIIFSILILMLGVTIGVLV, WLFNIGPILVLIPVFLSYLVI, IGVFFWIAVSSVVPLGLLMAG, AAQSISYEIPLALSVLSIALL, FLSWNLWRQPIGFIVFFIASL, YSGMKFAFFYLASYLNLLVSS, LFVTILYLGGWHFSIPFFSLF, VISIIIGIVITLVKSYLFLFI, and FLLPIALGNLLLTTSFQLFLL.

This sequence belongs to the complex I subunit 1 family. NDH is composed of at least 16 different subunits, 5 of which are encoded in the nucleus.

It localises to the plastid. Its subcellular location is the chloroplast thylakoid membrane. The enzyme catalyses a plastoquinone + NADH + (n+1) H(+)(in) = a plastoquinol + NAD(+) + n H(+)(out). It catalyses the reaction a plastoquinone + NADPH + (n+1) H(+)(in) = a plastoquinol + NADP(+) + n H(+)(out). In terms of biological role, NDH shuttles electrons from NAD(P)H:plastoquinone, via FMN and iron-sulfur (Fe-S) centers, to quinones in the photosynthetic chain and possibly in a chloroplast respiratory chain. The immediate electron acceptor for the enzyme in this species is believed to be plastoquinone. Couples the redox reaction to proton translocation, and thus conserves the redox energy in a proton gradient. The polypeptide is NAD(P)H-quinone oxidoreductase subunit 1, chloroplastic (Marchantia polymorpha (Common liverwort)).